Reading from the N-terminus, the 448-residue chain is Methylenetetrahydrofolate--tRNA-(uracil-5-)-methyltransferase TrmFO (448 aa).

10 to 15 provides a ligand contact to FAD; the sequence is GAGLAG.

It belongs to the MnmG family. TrmFO subfamily. FAD is required as a cofactor.

It localises to the cytoplasm. It carries out the reaction uridine(54) in tRNA + (6R)-5,10-methylene-5,6,7,8-tetrahydrofolate + NADH + H(+) = 5-methyluridine(54) in tRNA + (6S)-5,6,7,8-tetrahydrofolate + NAD(+). It catalyses the reaction uridine(54) in tRNA + (6R)-5,10-methylene-5,6,7,8-tetrahydrofolate + NADPH + H(+) = 5-methyluridine(54) in tRNA + (6S)-5,6,7,8-tetrahydrofolate + NADP(+). Catalyzes the folate-dependent formation of 5-methyl-uridine at position 54 (M-5-U54) in all tRNAs. The protein is Methylenetetrahydrofolate--tRNA-(uracil-5-)-methyltransferase TrmFO of Lactococcus lactis subsp. cremoris (strain MG1363).